The chain runs to 352 residues: tRNA N6-adenosine threonylcarbamoyltransferase (352 aa).

A divalent metal cation is bound by residues H114, H118, and Y135. Residues 135–139 (YVSGG), D167, G182, E186, and N283 contribute to the substrate site. D311 is an a divalent metal cation binding site.

This sequence belongs to the KAE1 / TsaD family. In terms of assembly, component of the EKC/KEOPS complex composed of at least BUD32, CGI121, GON7, KAE1 and PCC1; the whole complex dimerizes. A divalent metal cation serves as cofactor.

It localises to the cytoplasm. The protein localises to the nucleus. It catalyses the reaction L-threonylcarbamoyladenylate + adenosine(37) in tRNA = N(6)-L-threonylcarbamoyladenosine(37) in tRNA + AMP + H(+). In terms of biological role, component of the EKC/KEOPS complex that is required for the formation of a threonylcarbamoyl group on adenosine at position 37 (t(6)A37) in tRNAs that read codons beginning with adenine. The complex is probably involved in the transfer of the threonylcarbamoyl moiety of threonylcarbamoyl-AMP (TC-AMP) to the N6 group of A37. KAE1 likely plays a direct catalytic role in this reaction, but requires other protein(s) of the complex to fulfill this activity. The EKC/KEOPS complex also promotes both telomere uncapping and telomere elongation. The complex is required for efficient recruitment of transcriptional coactivators. The chain is tRNA N6-adenosine threonylcarbamoyltransferase from Phaeosphaeria nodorum (strain SN15 / ATCC MYA-4574 / FGSC 10173) (Glume blotch fungus).